Reading from the N-terminus, the 36-residue chain is Endoglucanase Cel12A (36 aa).

The protein belongs to the glycosyl hydrolase 12 (cellulase H) family.

It is found in the secreted. The protein localises to the extracellular space. The enzyme catalyses Endohydrolysis of (1-&gt;4)-beta-D-glucosidic linkages in cellulose, lichenin and cereal beta-D-glucans.. Its function is as follows. Has carboxymethylcellulase activity. In Gloeophyllum trabeum (Brown rot fungus), this protein is Endoglucanase Cel12A.